The chain runs to 412 residues: Alanyl-tRNA editing protein Aarsd1-A (412 aa).

Zn(2+) contacts are provided by His-108, His-112, Cys-208, and His-212.

Belongs to the class-II aminoacyl-tRNA synthetase family. Alax-L subfamily. It depends on Zn(2+) as a cofactor.

The protein localises to the cytoplasm. Its function is as follows. Functions in trans to edit the amino acid moiety from incorrectly charged tRNA(Ala). The sequence is that of Alanyl-tRNA editing protein Aarsd1-A (aarsd1-a) from Xenopus laevis (African clawed frog).